Consider the following 139-residue polypeptide: Acidic phospholipase A2 Ts-A4 (139 aa).

An N-terminal signal peptide occupies residues 1 to 16 (MRTLWILAVLLVGVEG). Intrachain disulfides connect Cys42/Cys132, Cys44/Cys60, Cys59/Cys111, Cys65/Cys139, Cys66/Cys104, Cys73/Cys97, and Cys91/Cys102. Ca(2+) is bound by residues Tyr43, Gly45, and Gly47. His63 is a catalytic residue. Asp64 provides a ligand contact to Ca(2+). The active site involves Asp105.

It depends on Ca(2+) as a cofactor. In terms of tissue distribution, expressed by the venom gland.

It is found in the secreted. The catalysed reaction is a 1,2-diacyl-sn-glycero-3-phosphocholine + H2O = a 1-acyl-sn-glycero-3-phosphocholine + a fatty acid + H(+). PLA2 catalyzes the calcium-dependent hydrolysis of the 2-acyl groups in 3-sn-phosphoglycerides. The polypeptide is Acidic phospholipase A2 Ts-A4 (Trimeresurus stejnegeri (Chinese green tree viper)).